Here is a 293-residue protein sequence, read N- to C-terminus: NAD kinase (293 aa).

Asp-72 serves as the catalytic Proton acceptor. Residues 72–73, 146–147, Arg-157, Arg-174, Asp-176, 187–192, and Gln-247 contribute to the NAD(+) site; these read DG, ND, and TAYALS.

This sequence belongs to the NAD kinase family. A divalent metal cation serves as cofactor.

The protein localises to the cytoplasm. It catalyses the reaction NAD(+) + ATP = ADP + NADP(+) + H(+). Its function is as follows. Involved in the regulation of the intracellular balance of NAD and NADP, and is a key enzyme in the biosynthesis of NADP. Catalyzes specifically the phosphorylation on 2'-hydroxyl of the adenosine moiety of NAD to yield NADP. The protein is NAD kinase of Chromohalobacter salexigens (strain ATCC BAA-138 / DSM 3043 / CIP 106854 / NCIMB 13768 / 1H11).